The chain runs to 360 residues: uncharacterized protein (360 aa).

Residues 11-40 enclose the 4Fe-4S ferredoxin-type domain; that stretch reads KEEVWDTNRCSGCGACVAVCPVNNLYFREE.

Belongs to the FrhB family.

This is an uncharacterized protein from Methanocaldococcus jannaschii (strain ATCC 43067 / DSM 2661 / JAL-1 / JCM 10045 / NBRC 100440) (Methanococcus jannaschii).